The sequence spans 180 residues: Non-specific lipid transfer protein GPI-anchored 3 (180 aa).

The N-terminal stretch at 1-22 (MEAVRFAVAVVLVFCYVTSSNA) is a signal peptide. 4 cysteine pairs are disulfide-bonded: Cys-41-Cys-78, Cys-48-Cys-62, Cys-63-Cys-104, and Cys-76-Cys-113. 2 N-linked (GlcNAc...) asparagine glycosylation sites follow: Asn-91 and Asn-120. Composition is skewed to low complexity over residues 116–125 (SAGTNSSSTP) and 133–156 (PASS…TAKP). Positions 116 to 156 (SAGTNSSSTPPATPKTPPASSTSTGTGSGSTGNAAPSTAKP) are disordered. Ser-158 carries GPI-anchor amidated serine lipidation. The propeptide at 159 to 180 (SAPAINFGGLSFASAVVATLFF) is removed in mature form.

This sequence belongs to the plant LTP family. Restricted to stamen, pollen and sporophytic tissues. Also detected, at low levels, in stems and leaves.

Its subcellular location is the cell membrane. In terms of biological role, lipid transfer protein involved in seed and ovule maturation and development, probably by regulating the fatty acids homeostasis during suberin and sporopollenin biosynthesis or deposition. The chain is Non-specific lipid transfer protein GPI-anchored 3 from Arabidopsis thaliana (Mouse-ear cress).